The following is a 594-amino-acid chain: Arginine--tRNA ligase (594 aa).

Positions 139-149 (ANPTGPLHVGH) match the 'HIGH' region motif.

Belongs to the class-I aminoacyl-tRNA synthetase family. Monomer.

The protein resides in the cytoplasm. The enzyme catalyses tRNA(Arg) + L-arginine + ATP = L-arginyl-tRNA(Arg) + AMP + diphosphate. The protein is Arginine--tRNA ligase of Burkholderia thailandensis (strain ATCC 700388 / DSM 13276 / CCUG 48851 / CIP 106301 / E264).